The sequence spans 254 residues: Switch-activating protein 1 (254 aa).

Positions 1–10 (MEAPKMELKS) are enriched in basic and acidic residues. Positions 1-30 (MEAPKMELKSYKRKNASLSPSSSPAKAQRT) are disordered. Over residues 16–25 (ASLSPSSSPA) the composition is skewed to low complexity. Phosphoserine is present on residues Ser-17 and Ser-19. Repeat copies occupy residues 221–224 (GVNM), 225–228 (GTNM), 229–232 (GANM), and 233–236 (GANM). A 4 X 4 AA tandem repeats of G-[ATV]-N-M region spans residues 221–236 (GVNMGTNMGANMGANM).

In terms of assembly, homodimer.

It localises to the nucleus. Functionally, binds to sequences required for mating-type switching. Makes a simultaneous contact with both the alpha and beta domains of the switch-activating site SAS1. Also binds to replication fork barrier 1 (RFB1) located within a 78 base pair sequence near the 3' end of the rRNA coding region. This leads to replication fork blockage. It binds the consensus sequence 5'-TA[AG]GCAGNTN[CT]AACG[AC]G-3'. Its function is as follows. Has a role in chromosome organization and integrity where it is involved in chromosome segregation. Has a role in sister chromatid cohesion and condensation. The sequence is that of Switch-activating protein 1 (sap1) from Schizosaccharomyces pombe (strain 972 / ATCC 24843) (Fission yeast).